Here is a 339-residue protein sequence, read N- to C-terminus: Methionine import ATP-binding protein MetN 1 (339 aa).

An ABC transporter domain is found at 2-241 (ISFNNVSKVY…PKTKTTQNFV (240 aa)). Residue 38–45 (GFSGAGKS) coordinates ATP.

Belongs to the ABC transporter superfamily. Methionine importer (TC 3.A.1.24) family. As to quaternary structure, the complex is composed of two ATP-binding proteins (MetN), two transmembrane proteins (MetI) and a solute-binding protein (MetQ).

It is found in the cell membrane. The enzyme catalyses L-methionine(out) + ATP + H2O = L-methionine(in) + ADP + phosphate + H(+). It carries out the reaction D-methionine(out) + ATP + H2O = D-methionine(in) + ADP + phosphate + H(+). Its function is as follows. Part of the ABC transporter complex MetNIQ involved in methionine import. Responsible for energy coupling to the transport system. The sequence is that of Methionine import ATP-binding protein MetN 1 from Bacillus thuringiensis subsp. konkukian (strain 97-27).